Here is an 87-residue protein sequence, read N- to C-terminus: Large ribosomal subunit protein uL23c (87 aa).

The protein belongs to the universal ribosomal protein uL23 family. Part of the 50S ribosomal subunit.

Its subcellular location is the plastid. It localises to the chloroplast. Its function is as follows. Binds to 23S rRNA. The protein is Large ribosomal subunit protein uL23c (rpl23) of Bigelowiella natans (Pedinomonas minutissima).